The chain runs to 424 residues: MCDRNGGRRLRQWLIEQIDSSMYPGLIWENDEKTMFRIPWKHAGKQDYNQEVDASIFKAWAVFKGKFKEGDKAEPATWKTRLRCALNKSPDFEEVTDRSQLDISEPYKVYRIVPEEEQKCKLGVAPAGCMSEVPEMECGRSEIEELIKEPSVDEYMGMTKRSPSPPEACRSQILPDWWVQQPSAGLPLVTGYAAYDTHHSAFSQMVISFYYGGKLVGQATTTCLEGCRLSLSQPGLPKLYGPDGLEPVCFPTADTIPSERQRQVTRKLFGHLERGVLLHSNRKGVFVKRLCQGRVFCSGNAVVCKGRPNKLERDEVVQVFDTNQFIRELQQFYATQSRLPDSRVVLCFGEEFPDTVPLRSKLILVQVEQLYARQLVEEAGKSCGAGSLMPALEEPQPDQAFRMFPDICTSHQRPFFRENQQITV.

The segment at residues 7 to 114 is a DNA-binding region (IRF tryptophan pentad repeat); sequence GRRLRQWLIE…EPYKVYRIVP (108 aa).

Belongs to the IRF family. Interacts with COPS2. Interacts (via C-terminus) with TRIM21 (via C-terminus). Interacts with the BATF-JUNB heterodimer. Interacts with BATF (via bZIP domain); the interaction is direct. Interacts with SPI1. Post-translationally, ubiquitinated. Ubiquitination by TRIM21 in macrophages, a process that is strongly increased upon interferon gamma stimulation, leds to the enhanced transcriptional activity of target cytokine genes. Ubiquitination leads to its degradation by the proteasome. Sumoylated with SUMO3. Desumoylated by SENP1. As to expression, expressed in bone marrow macrophages (at protein level). Mainly expressed in lymphoid tissues. Predominantly expressed in CD8(+)-expressing dendritic cells.

Its subcellular location is the nucleus. It is found in the cytoplasm. Its function is as follows. Transcription factor that specifically binds to the upstream regulatory region of type I interferon (IFN) and IFN-inducible MHC class I genes (the interferon consensus sequence (ICS)). Can both act as a transcriptional activator or repressor. Plays a negative regulatory role in cells of the immune system. Involved in CD8(+) dendritic cell differentiation by forming a complex with the BATF-JUNB heterodimer in immune cells, leading to recognition of AICE sequence (5'-TGAnTCA/GAAA-3'), an immune-specific regulatory element, followed by cooperative binding of BATF and IRF8 and activation of genes. Required for the development of plasmacytoid dendritic cells (pDCs), which produce most of the type I IFN in response to viral infection. Positively regulates macroautophagy in dendritic cells. Acts as a transcriptional repressor of osteoclast differentiation factors such as NFATC1 and EEIG1. The polypeptide is Interferon regulatory factor 8 (Mus musculus (Mouse)).